Consider the following 199-residue polypeptide: N-(5'-phosphoribosyl)anthranilate isomerase (199 aa).

This sequence belongs to the TrpF family.

The enzyme catalyses N-(5-phospho-beta-D-ribosyl)anthranilate = 1-(2-carboxyphenylamino)-1-deoxy-D-ribulose 5-phosphate. It participates in amino-acid biosynthesis; L-tryptophan biosynthesis; L-tryptophan from chorismate: step 3/5. In Lacticaseibacillus casei (strain BL23) (Lactobacillus casei), this protein is N-(5'-phosphoribosyl)anthranilate isomerase.